Here is a 357-residue protein sequence, read N- to C-terminus: Cytochrome c peroxidase, mitochondrial (357 aa).

The N-terminal 23 residues, 1-23, are a transit peptide targeting the mitochondrion; the sequence is MSATALRIAPIASRTFQRRLGYL. Catalysis depends on His-116, which acts as the Proton acceptor. A disordered region spans residues 189–212; that stretch reads PWRSGRTDLPEDMTPDNGRLPDGD. Heme b is bound at residue His-239. Trp-255 (tryptophan radical intermediate) is an active-site residue.

The protein belongs to the peroxidase family. Cytochrome c peroxidase subfamily. Forms a one-to-one complex with cytochrome c. Heme b is required as a cofactor.

Its subcellular location is the mitochondrion matrix. The protein resides in the mitochondrion intermembrane space. It catalyses the reaction 2 Fe(II)-[cytochrome c] + H2O2 + 2 H(+) = 2 Fe(III)-[cytochrome c] + 2 H2O. Functionally, destroys radicals which are normally produced within the cells and which are toxic to biological systems. The sequence is that of Cytochrome c peroxidase, mitochondrial from Candida glabrata (strain ATCC 2001 / BCRC 20586 / JCM 3761 / NBRC 0622 / NRRL Y-65 / CBS 138) (Yeast).